The primary structure comprises 87 residues: Small ribosomal subunit protein bS18 (87 aa).

The segment covering 1–10 (MAGKSSGDRR) has biased composition (basic and acidic residues). The tract at residues 1-23 (MAGKSSGDRRKLLRGAKVGKNAA) is disordered.

The protein belongs to the bacterial ribosomal protein bS18 family. Part of the 30S ribosomal subunit. Forms a tight heterodimer with protein bS6.

Binds as a heterodimer with protein bS6 to the central domain of the 16S rRNA, where it helps stabilize the platform of the 30S subunit. The chain is Small ribosomal subunit protein bS18 from Clavibacter sepedonicus (Clavibacter michiganensis subsp. sepedonicus).